The chain runs to 203 residues: RNA pyrophosphohydrolase (203 aa).

The Nudix hydrolase domain occupies 6-149 (GFRPNVGIIL…KRNVYQMALT (144 aa)). The short motif at 38–59 (GGIKHGESPEQAMFRELHEEVG) is the Nudix box element. Residues 170–203 (RAHRRDEGSEHNDHLDPTGPHDAGASVSEPKQAE) are disordered. The span at 173–185 (RRDEGSEHNDHLD) shows a compositional bias: basic and acidic residues.

The protein belongs to the Nudix hydrolase family. RppH subfamily. A divalent metal cation serves as cofactor.

Functionally, accelerates the degradation of transcripts by removing pyrophosphate from the 5'-end of triphosphorylated RNA, leading to a more labile monophosphorylated state that can stimulate subsequent ribonuclease cleavage. This chain is RNA pyrophosphohydrolase, found in Leptothrix cholodnii (strain ATCC 51168 / LMG 8142 / SP-6) (Leptothrix discophora (strain SP-6)).